The primary structure comprises 860 residues: MSAAAAVTSWTNGCWSPAATRVNDGGKDDVWVAVDEADVSGARGSDGGGRPPLFQTYKVKGSILHPYRFLILARLIAIVAFFAWRIRHKNRDGAWLWTMSMVGDVWFGFSWVLNQLPKQSPIKRVPDIAALADRHSGDLPGVDVFVTTVDPVDEPILYTVNTILSILAADYPVDRYACYLSDDGGTLVHYEAMVEVAKFAELWVPFCRKHCVEPRSPENYFAMKTQAYKGGVPGELMSDHRRVRREYEEFKVRIDSLSSTIRQRSDVYNAKHAGENATWMADGTHWPGTWFEPADNHQRGKHAGIVQVLLNHPSCKPRLGLAASAENPVDFSGVDVRLPMLVYISREKRPGYNHQKKAGAMNVMLRVSALLSNAPFVINFDGDHYVNNSQAFRAPMCFMLDGRGRGGENTAFVQFPQRFDDVDPTDRYANHNRVFFDGTMLSLNGLQGPSYLGTGTMFRRVALYGVEPPRWGAAASQIKAMDIANKFGSSTSFVGTMLDGANQERSITPLAVLDESVAGDLAALTACAYEDGTSWGRDVGWVYNIATEDVVTGFRMHRQGWRSVYASVEPAAFRGTAPINLTERLYQILRWSGGSLEMFFSHSNALLAGRRLHPLQRVAYLNMSTYPIVTVFIFFYNLFPVMWLISEQYYIQRPFGEYLLYLVAVIAMIHVIGMFEVKWAGITLLDWCRNEQFYMIGSTGVYPTAVLYMALKLVTGKGIYFRLTSKQTAASSGDKFADLYTVRWVPLLIPTIVIMVVNVAAVGVAVGKAAAWGPLTEPGWLAVLGMVFNVWILVLLYPFALGVMGQWGKRPAVLFVAMAMAVAAVAAMYVAFGAPYQAELSGVAASLGKVAAASLTGPSG.

Transmembrane regions (helical) follow at residues 63-83 and 93-113; these read ILHP…AFFA and GAWL…SWVL. D183 is an active-site residue. Positions 235 to 263 form a coiled coil; that stretch reads ELMSDHRRVRREYEEFKVRIDSLSSTIRQ. Substrate is bound by residues D381 and D383. The active site involves D549. Helical transmembrane passes span 625 to 645, 655 to 675, 693 to 713, 747 to 767, 781 to 801, and 812 to 832; these read TYPI…MWLI, FGEY…IGMF, FYMI…ALKL, LLIP…VAVG, LAVL…PFAL, and AVLF…YVAF.

This sequence belongs to the glycosyltransferase 2 family. Plant cellulose synthase-like F subfamily.

The protein localises to the golgi apparatus membrane. In terms of biological role, may catalyze both beta-1,3 and beta-1,4 glycosidic linkage on beta-D-glucan. Essential for (1,3;1,4)-beta-D-glucans synthesis in grasses and cereals (Poaceae). The mixed-linked glucans (which are not present in walls of dicotyledons or most other monocotyledonous plants) are particularly important constituents of the walls of the starchy endosperm and aleurone cells of cereal grains such as oats, wheat, rice and barley. They can account for up to 70% by weight of the wall. This Oryza sativa subsp. japonica (Rice) protein is Putative mixed-linked glucan synthase 1 (CSFL1).